The chain runs to 228 residues: Large ribosomal subunit protein uL3 (228 aa).

This sequence belongs to the universal ribosomal protein uL3 family. Part of the 50S ribosomal subunit. Forms a cluster with proteins L14 and L19.

In terms of biological role, one of the primary rRNA binding proteins, it binds directly near the 3'-end of the 23S rRNA, where it nucleates assembly of the 50S subunit. This Leuconostoc mesenteroides subsp. mesenteroides (strain ATCC 8293 / DSM 20343 / BCRC 11652 / CCM 1803 / JCM 6124 / NCDO 523 / NBRC 100496 / NCIMB 8023 / NCTC 12954 / NRRL B-1118 / 37Y) protein is Large ribosomal subunit protein uL3.